The primary structure comprises 55 residues: Mannose/glucose-specific lectin alpha chain (55 aa).

This sequence belongs to the leguminous lectin family. Tetramer of two alpha and two beta chains.

The sequence is that of Mannose/glucose-specific lectin alpha chain from Lathyrus sativus (White vetchling).